Reading from the N-terminus, the 234-residue chain is Cell adhesion molecule CEACAM15 (234 aa).

The first 32 residues, Met1–Ala32, serve as a signal peptide directing secretion. Residues Asn28, Asn75, Asn151, and Asn184 are each glycosylated (N-linked (GlcNAc...) asparagine). Residues Pro146–Pro226 enclose the Ig-like C2-type domain. Cys165 and Cys213 are joined by a disulfide.

This sequence belongs to the immunoglobulin superfamily. CEA family. As to expression, detected in placenta.

This chain is Cell adhesion molecule CEACAM15, found in Mus musculus (Mouse).